The chain runs to 227 residues: Transmembrane emp24 domain-containing protein 1 (227 aa).

The first 23 residues, 1–23, serve as a signal peptide directing secretion; it reads MMAAGAALALALWLLMPPVGVGG. Over 24 to 194 the chain is Extracellular; sequence AGPPPIQDGE…LQEGNLERVN (171 aa). The GOLD domain occupies 43-125; that stretch reads KQCFYQSAPA…EKLVFFELIF (83 aa). Residues 145-170 are a coiled coil; it reads EMLDVKMEDIKESIETMRTRLERSIQ. A helical membrane pass occupies residues 195 to 215; that stretch reads FWSAVNVAVLLLVAVLQVCTL. The Cytoplasmic segment spans residues 216 to 227; that stretch reads KRFFQDKRPVPT. The COPII vesicle coat-binding signature appears at 218-219; it reads FF. The COPI vesicle coat-binding motif lies at 218–227; sequence FFQDKRPVPT.

The protein belongs to the EMP24/GP25L family. As to quaternary structure, homodimer in endoplasmic reticulum, endoplasmic reticulum-Golgi intermediate compartment and cis-Golgi network. Interacts with IL1RL1. Interacts with RNF26; this interaction is important to modulate innate immune signaling through the cGAS-STING pathway.

The protein resides in the cell membrane. Its subcellular location is the endoplasmic reticulum membrane. The protein localises to the golgi apparatus. It localises to the cis-Golgi network membrane. It is found in the endoplasmic reticulum-Golgi intermediate compartment membrane. In terms of biological role, potential role in vesicular protein trafficking, mainly in the early secretory pathway. May act as a cargo receptor at the lumenal side for incorporation of secretory cargo molecules into transport vesicles and may be involved in vesicle coat formation at the cytoplasmic side. Plays a positive role in IL-33-mediated IL-8 and IL-6 production by interacting with interleukin-33 receptor IL1RL1. Plays also a role in the modulation of innate immune signaling through the cGAS-STING pathway by interacting with RNF26. The chain is Transmembrane emp24 domain-containing protein 1 (TMED1) from Pongo abelii (Sumatran orangutan).